Here is a 338-residue protein sequence, read N- to C-terminus: Ferredoxin--NADP reductase (338 aa).

FAD-binding residues include D32, Q40, Y45, V85, F120, D287, and T327.

The protein belongs to the ferredoxin--NADP reductase type 2 family. In terms of assembly, homodimer. Requires FAD as cofactor.

It carries out the reaction 2 reduced [2Fe-2S]-[ferredoxin] + NADP(+) + H(+) = 2 oxidized [2Fe-2S]-[ferredoxin] + NADPH. In Wolbachia pipientis wMel, this protein is Ferredoxin--NADP reductase.